The following is a 78-amino-acid chain: NAD(P)H-quinone oxidoreductase subunit O (78 aa).

It belongs to the complex I NdhO subunit family. As to quaternary structure, NDH-1 can be composed of about 15 different subunits; different subcomplexes with different compositions have been identified which probably have different functions.

The protein resides in the cellular thylakoid membrane. The catalysed reaction is a plastoquinone + NADH + (n+1) H(+)(in) = a plastoquinol + NAD(+) + n H(+)(out). It carries out the reaction a plastoquinone + NADPH + (n+1) H(+)(in) = a plastoquinol + NADP(+) + n H(+)(out). Functionally, NDH-1 shuttles electrons from an unknown electron donor, via FMN and iron-sulfur (Fe-S) centers, to quinones in the respiratory and/or the photosynthetic chain. The immediate electron acceptor for the enzyme in this species is believed to be plastoquinone. Couples the redox reaction to proton translocation, and thus conserves the redox energy in a proton gradient. Cyanobacterial NDH-1 also plays a role in inorganic carbon-concentration. The sequence is that of NAD(P)H-quinone oxidoreductase subunit O from Prochlorococcus marinus (strain MIT 9301).